Reading from the N-terminus, the 226-residue chain is 2-C-methyl-D-erythritol 4-phosphate cytidylyltransferase (226 aa).

The protein belongs to the IspD/TarI cytidylyltransferase family. IspD subfamily.

The enzyme catalyses 2-C-methyl-D-erythritol 4-phosphate + CTP + H(+) = 4-CDP-2-C-methyl-D-erythritol + diphosphate. Its pathway is isoprenoid biosynthesis; isopentenyl diphosphate biosynthesis via DXP pathway; isopentenyl diphosphate from 1-deoxy-D-xylulose 5-phosphate: step 2/6. Functionally, catalyzes the formation of 4-diphosphocytidyl-2-C-methyl-D-erythritol from CTP and 2-C-methyl-D-erythritol 4-phosphate (MEP). This Bacillus thuringiensis (strain Al Hakam) protein is 2-C-methyl-D-erythritol 4-phosphate cytidylyltransferase.